The primary structure comprises 190 residues: TATA box-binding protein-like 1 (190 aa).

The protein belongs to the TBP family. In terms of assembly, binds TFIIA and TFIIB.

It localises to the cytoplasm. The protein localises to the nucleus. Functionally, part of a specialized transcription system that mediates the transcription of most ribosomal proteins through the 5'-TCT-3' motif which is a core promoter element at these genes. Seems to also mediate the transcription of NF1. Does not bind the TATA box. The chain is TATA box-binding protein-like 1 (TBPL1) from Pongo abelii (Sumatran orangutan).